Here is a 251-residue protein sequence, read N- to C-terminus: Flap endonuclease Xni (251 aa).

A Mg(2+)-binding site is contributed by Asp104. One can recognise a 5'-3' exonuclease domain in the interval Val160 to Leu249. Residues Leu171, Ala172, Pro180, Val182, and Ile185 each coordinate K(+). The interval Gly184–Ser189 is interaction with DNA.

It belongs to the Xni family. Mg(2+) is required as a cofactor. The cofactor is K(+).

Its function is as follows. Has flap endonuclease activity. During DNA replication, flap endonucleases cleave the 5'-overhanging flap structure that is generated by displacement synthesis when DNA polymerase encounters the 5'-end of a downstream Okazaki fragment. This chain is Flap endonuclease Xni, found in Salmonella newport (strain SL254).